Reading from the N-terminus, the 171-residue chain is Der GTPase-activating protein YihI (171 aa).

Disordered regions lie at residues 1–99 (MKKP…QAEL) and 145–171 (LSYD…RGGN). Basic and acidic residues predominate over residues 20–30 (TREELNQEARD). A compositionally biased stretch (basic residues) spans 31–40 (RKRLKKHRGH). Positions 147-160 (YDDDDEDDEEDEKQ) are enriched in acidic residues.

This sequence belongs to the YihI family. Interacts with Der.

Its function is as follows. A GTPase-activating protein (GAP) that modifies Der/EngA GTPase function. May play a role in ribosome biogenesis. The sequence is that of Der GTPase-activating protein YihI from Salmonella choleraesuis (strain SC-B67).